The following is a 149-amino-acid chain: Endoribonuclease YbeY (149 aa).

Zn(2+)-binding residues include histidine 106, histidine 110, and histidine 116.

It belongs to the endoribonuclease YbeY family. Requires Zn(2+) as cofactor.

The protein localises to the cytoplasm. Functionally, single strand-specific metallo-endoribonuclease involved in late-stage 70S ribosome quality control and in maturation of the 3' terminus of the 16S rRNA. The chain is Endoribonuclease YbeY from Methylobacillus flagellatus (strain ATCC 51484 / DSM 6875 / VKM B-1610 / KT).